A 201-amino-acid chain; its full sequence is CDP-diacylglycerol--serine O-phosphatidyltransferase (201 aa).

Transmembrane regions (helical) follow at residues 19–39, 57–77, 88–108, 112–132, 133–153, and 162–182; these read IITGLLAILLNSFSLIYLSII, FGAELDSISDVVSFGVAPAYL, LISAIIFCLCGALRLARFGIL, GFIGLPIPAGALLLVGFCQLI, NSYLINSILAILIGLLMISDI, and IFIYIFAVSLCLAIVGIPHFA.

The protein belongs to the CDP-alcohol phosphatidyltransferase class-I family.

It localises to the cell membrane. It catalyses the reaction a CDP-1,2-diacyl-sn-glycerol + L-serine = a 1,2-diacyl-sn-glycero-3-phospho-L-serine + CMP + H(+). This Methanocaldococcus jannaschii (strain ATCC 43067 / DSM 2661 / JAL-1 / JCM 10045 / NBRC 100440) (Methanococcus jannaschii) protein is CDP-diacylglycerol--serine O-phosphatidyltransferase (pssA).